The primary structure comprises 156 residues: Ribosomal RNA large subunit methyltransferase H (156 aa).

Residues leucine 73, glycine 104, and 123–128 each bind S-adenosyl-L-methionine; that span reads LSSLTL.

Belongs to the RNA methyltransferase RlmH family. In terms of assembly, homodimer.

It localises to the cytoplasm. It carries out the reaction pseudouridine(1915) in 23S rRNA + S-adenosyl-L-methionine = N(3)-methylpseudouridine(1915) in 23S rRNA + S-adenosyl-L-homocysteine + H(+). Specifically methylates the pseudouridine at position 1915 (m3Psi1915) in 23S rRNA. In Neisseria meningitidis serogroup C (strain 053442), this protein is Ribosomal RNA large subunit methyltransferase H.